The primary structure comprises 86 residues: Small ribosomal subunit protein uS15c (86 aa).

It belongs to the universal ribosomal protein uS15 family. In terms of assembly, part of the 30S ribosomal subunit.

The protein resides in the plastid. In Cuscuta gronovii (Common dodder), this protein is Small ribosomal subunit protein uS15c (rps15).